A 440-amino-acid chain; its full sequence is 23S rRNA (uracil(1939)-C(5))-methyltransferase RlmD (440 aa).

The TRAM domain maps to 11-69 (STLDTKHQPVTIERLDHQGSGLAFLHKKPLFVDGALPGEEVLIQLTENKSKYARGQLIK). The [4Fe-4S] cluster site is built by Cys-82, Cys-88, Cys-91, and Cys-169. Gln-272, Phe-301, Asn-306, Glu-322, Asn-349, and Asp-370 together coordinate S-adenosyl-L-methionine. The active-site Nucleophile is the Cys-396.

The protein belongs to the class I-like SAM-binding methyltransferase superfamily. RNA M5U methyltransferase family. RlmD subfamily.

The catalysed reaction is uridine(1939) in 23S rRNA + S-adenosyl-L-methionine = 5-methyluridine(1939) in 23S rRNA + S-adenosyl-L-homocysteine + H(+). In terms of biological role, catalyzes the formation of 5-methyl-uridine at position 1939 (m5U1939) in 23S rRNA. The polypeptide is 23S rRNA (uracil(1939)-C(5))-methyltransferase RlmD (Vibrio cholerae serotype O1 (strain ATCC 39541 / Classical Ogawa 395 / O395)).